The chain runs to 97 residues: Large ribosomal subunit protein uL23 (97 aa).

This sequence belongs to the universal ribosomal protein uL23 family. In terms of assembly, part of the 50S ribosomal subunit. Contacts protein L29, and trigger factor when it is bound to the ribosome.

In terms of biological role, one of the early assembly proteins it binds 23S rRNA. One of the proteins that surrounds the polypeptide exit tunnel on the outside of the ribosome. Forms the main docking site for trigger factor binding to the ribosome. The protein is Large ribosomal subunit protein uL23 of Marinobacter nauticus (strain ATCC 700491 / DSM 11845 / VT8) (Marinobacter aquaeolei).